The chain runs to 536 residues: Chlorophyllide a oxygenase, chloroplastic (536 aa).

A chloroplast-targeting transit peptide spans 1–36 (MNAAVFSPSALSLPISFSKTRSSFLSRKKGVKGEFR). Positions 123–150 (IGTVKKELAGLQEELSKAHQQVHISEAR) form a coiled coil. Residues 221 to 321 (WYPVAFTADL…CLEQEGMIWI (101 aa)) enclose the Rieske domain. Residues C262, H264, C281, and H284 each contribute to the [2Fe-2S] cluster site. Fe cation-binding residues include D360, D364, H367, and H372.

It is found in the plastid. Its subcellular location is the chloroplast membrane. The protein resides in the chloroplast thylakoid membrane. It carries out the reaction chlorophyllide a + 2 NADPH + 2 O2 + 2 H(+) = chlorophyllide b + 2 NADP(+) + 3 H2O. Its pathway is porphyrin-containing compound metabolism; chlorophyll biosynthesis. Catalyzes a two-step oxygenase reaction involved in the synthesis of chlorophyll b. Acts specifically on the non-esterified chlorophyllide a and not on chlorophyll a. This Arabidopsis thaliana (Mouse-ear cress) protein is Chlorophyllide a oxygenase, chloroplastic (CAO).